A 434-amino-acid chain; its full sequence is 3-phosphoshikimate 1-carboxyvinyltransferase (434 aa).

3-phosphoshikimate-binding residues include Lys-22, Ser-23, and Arg-27. Lys-22 contacts phosphoenolpyruvate. Residues Gly-93 and Arg-121 each contribute to the phosphoenolpyruvate site. 3-phosphoshikimate-binding residues include Ser-168, Ser-169, Gln-170, Ser-199, Asp-320, and Lys-347. Phosphoenolpyruvate is bound at residue Gln-170. The active-site Proton acceptor is Asp-320. Residues Arg-351, Arg-394, and Lys-419 each coordinate phosphoenolpyruvate.

This sequence belongs to the EPSP synthase family. Monomer.

It localises to the cytoplasm. The enzyme catalyses 3-phosphoshikimate + phosphoenolpyruvate = 5-O-(1-carboxyvinyl)-3-phosphoshikimate + phosphate. It functions in the pathway metabolic intermediate biosynthesis; chorismate biosynthesis; chorismate from D-erythrose 4-phosphate and phosphoenolpyruvate: step 6/7. In terms of biological role, catalyzes the transfer of the enolpyruvyl moiety of phosphoenolpyruvate (PEP) to the 5-hydroxyl of shikimate-3-phosphate (S3P) to produce enolpyruvyl shikimate-3-phosphate and inorganic phosphate. This chain is 3-phosphoshikimate 1-carboxyvinyltransferase, found in Burkholderia cenocepacia (strain ATCC BAA-245 / DSM 16553 / LMG 16656 / NCTC 13227 / J2315 / CF5610) (Burkholderia cepacia (strain J2315)).